We begin with the raw amino-acid sequence, 633 residues long: Replication protein E1 (633 aa).

Positions 84–86 (KRK) match the Nuclear localization signal motif. 3 positions are modified to phosphoserine; by host: Ser-90, Ser-94, and Ser-108. Residues 107–116 (LSPRLGAISL) carry the Nuclear export signal motif. Residues 148–168 (NTEGTDETETDQVQTVSGETT) are disordered. Residues 158–168 (DQVQTVSGETT) show a composition bias toward polar residues. Residues 169 to 335 (TDSLGRQQIT…QTVIEYSLAD (167 aa)) are DNA-binding region. Residues 434–584 (VDFISFMIAL…FPFDSNGNPV (151 aa)) form the SF3 helicase domain. 460-467 (GPPDTGKS) contacts ATP. A Glycyl lysine isopeptide (Lys-Gly) (interchain with G-Cter in SUMO) cross-link involves residue Lys-541. Residues 609 to 633 (DNEEEENGDPSNTFRCVPGKASRPI) are disordered.

This sequence belongs to the papillomaviridae E1 protein family. Can form hexamers. Interacts with E2 protein; this interaction increases E1 DNA binding specificity. Interacts with host DNA polymerase subunit POLA2. Interacts with host single stranded DNA-binding protein RPA1. Interacts with host TOP1; this interaction stimulates the enzymatic activity of TOP1. Phosphorylated. Post-translationally, sumoylated.

It is found in the host nucleus. The catalysed reaction is Couples ATP hydrolysis with the unwinding of duplex DNA by translocating in the 3'-5' direction.. It carries out the reaction ATP + H2O = ADP + phosphate + H(+). Functionally, ATP-dependent DNA 3'-5' helicase required for initiation of viral DNA replication. It forms a complex with the viral E2 protein. The E1-E2 complex binds to the replication origin which contains binding sites for both proteins. During the initial step, a dimer of E1 interacts with a dimer of protein E2 leading to a complex that binds the viral origin of replication with high specificity. Then, a second dimer of E1 displaces the E2 dimer in an ATP-dependent manner to form the E1 tetramer. Following this, two E1 monomers are added to each half of the site, which results in the formation of two E1 trimers on the viral ori. Subsequently, two hexamers will be created. The double hexamer acts as a bi-directional helicase machinery and unwinds the viral DNA and then recruits the host DNA polymerase to start replication. The protein is Replication protein E1 of Homo sapiens (Human).